A 277-amino-acid chain; its full sequence is Carbonyl reductase [NADPH] 3 (277 aa).

Ser-2 carries the N-acetylserine modification. Residues Val-10 to Val-34, Arg-38 to Arg-42, Asp-63 to Ile-64, and Asn-90 each bind NADP(+). Ser-30 is modified (phosphoserine). Substrate is bound at residue Ser-140. The active-site Proton acceptor is the Tyr-194. Tyr-194–Lys-198 is an NADP(+) binding site.

The protein belongs to the short-chain dehydrogenases/reductases (SDR) family.

The protein resides in the cytoplasm. The enzyme catalyses a secondary alcohol + NADP(+) = a ketone + NADPH + H(+). It catalyses the reaction a quinone + NADPH + H(+) = a quinol + NADP(+). Functionally, catalyzes the NADPH-dependent reduction of carbonyl compounds to their corresponding alcohols. Has low NADPH-dependent oxidoreductase activity. Acts on several orthoquinones, as well as on non-quinone compounds, such as isatin or on the anticancer drug oracin. Best substrates for CBR3 is 1,2- naphthoquinone, hence could play a role in protection against cytotoxicity of exogenous quinones. Exerts activity toward ortho-quinones but not paraquinones. No endogenous substrate for CBR3 except isatin has been identified. The polypeptide is Carbonyl reductase [NADPH] 3 (Cbr3) (Mus musculus (Mouse)).